Consider the following 887-residue polypeptide: Oxysterol-binding protein-related protein 3 (887 aa).

Positions 1–35 (MMSDEKNLGVSQKLVSPSRSTSSCSSKQGSRQDSW) are disordered. Ser16 and Ser34 each carry phosphoserine. The segment covering 16–32 (SPSRSTSSCSSKQGSRQ) has biased composition (low complexity). Residues 51–146 (PPVQKGFLLK…WVSKLRHHRM (96 aa)) form the PH domain. The FFAT 1 signature appears at 161–167 (HFFSGST). Phosphoserine is present on residues Ser200, Ser251, and Ser265. Residues 261–326 (GSFESPKKEK…KNYSDGSETS (66 aa)) are disordered. Over residues 268-280 (KEKRSHRRWRSRA) the composition is skewed to basic residues. A phosphoserine mark is found at Ser304, Ser309, Ser320, Ser323, Ser371, Ser372, Ser410, Ser425, Ser437, and Ser440. The FFAT 2 signature appears at 450–454 (EFFDA).

This sequence belongs to the OSBP family. As to quaternary structure, homodimer. Interacts with RRAS. Interacts (phosphorylated form) with VAPA. Interacts with OSBPL6. In terms of processing, phosphorylation is enhanced in vitro by phorbol-12-myristate-13-acetate (PMA), forskolin and calcium ionophore A23187. Phosphorylation seems to be stimulated in conditions of low cell-cell (or cell-matrix) adhesion. As to expression, expressed in a subset of small lymphocytes (at protein level). Expressed at high concentration in kidney, lymph node and thymus. Expressed at moderate concentration in stomach, jejunum, ileum, appendix, spleen, leukocytes, trachea, lung and thyroid gland. Expressed at low concentration in whole brain, esophagus, duodenum, ileocecum, colon, skeletal muscle, bone marrow, placenta and mammary gland. Isoform 1a, isoform 1b, isoform 1c and isoform 1d are highly expressed in brain, bone marrow, colon, kidney, lung, skeletal muscle, spleen, thymus and thyroid. Not expressed in heart and liver. Isoform 2a, isoform 2b, isoform 2c and isoform 2d are expressed in brain, bone marrow, kidney, skeletal muscle, spleen, thymus and thyroid. Not expressed in heart, liver and lung.

It localises to the endoplasmic reticulum membrane. Its subcellular location is the cytoplasm. The protein resides in the cytosol. It is found in the cell membrane. The protein localises to the cell projection. It localises to the filopodium tip. Its subcellular location is the nucleus membrane. In terms of biological role, phosphoinositide-binding protein which associates with both cell and endoplasmic reticulum (ER) membranes. Can bind to the ER membrane protein VAPA and recruit VAPA to plasma membrane sites, thus linking these intracellular compartments. The ORP3-VAPA complex stimulates RRAS signaling which in turn attenuates integrin beta-1 (ITGB1) activation at the cell surface. With VAPA, may regulate ER morphology. Has a role in regulation of the actin cytoskeleton, cell polarity and cell adhesion. Binds to phosphoinositides with preference for PI(3,4)P2 and PI(3,4,5)P3. Also binds 25-hydroxycholesterol and cholesterol. In Homo sapiens (Human), this protein is Oxysterol-binding protein-related protein 3 (OSBPL3).